Here is a 617-residue protein sequence, read N- to C-terminus: Procollagen galactosyltransferase 1 (617 aa).

The signal sequence occupies residues 1 to 31 (MAALPRGSRGLPLLPLLLLLPPLGGPRGADG). N91, N179, and N376 each carry an N-linked (GlcNAc...) asparagine glycan. The segment covering 582 to 601 (DRAKSQKMREQQALSREAKN) has biased composition (basic and acidic residues). Residues 582–617 (DRAKSQKMREQQALSREAKNSDVLQSPLDSTARDEL) are disordered. The Prevents secretion from ER signature appears at 614-617 (RDEL).

It belongs to the glycosyltransferase 25 family. N-glycosylated.

The protein resides in the endoplasmic reticulum lumen. It carries out the reaction (5R)-5-hydroxy-L-lysyl-[collagen] + UDP-alpha-D-galactose = (5R)-5-O-(beta-D-galactosyl)-5-hydroxy-L-lysyl-[collagen] + UDP + H(+). Functionally, beta-galactosyltransferase that transfers beta-galactose to hydroxylysine residues of type I collagen. By acting on collagen glycosylation, facilitates the formation of collagen triple helix. Also involved in the biosynthesis of collagen type IV. This is Procollagen galactosyltransferase 1 (Colgalt1) from Mus musculus (Mouse).